A 482-amino-acid polypeptide reads, in one-letter code: Long chain base biosynthesis protein 1c (482 aa).

A helical membrane pass occupies residues 33-53 (FGIHIDGHLVVEGLLIAAILF).

This sequence belongs to the class-II pyridoxal-phosphate-dependent aminotransferase family. In terms of assembly, heterodimer with LCB2. Component of the serine palmitoyltransferase (SPT) complex, composed of LCB1 and LCB2. The cofactor is pyridoxal 5'-phosphate.

The protein localises to the endoplasmic reticulum membrane. It carries out the reaction L-serine + hexadecanoyl-CoA + H(+) = 3-oxosphinganine + CO2 + CoA. It participates in lipid metabolism; sphingolipid metabolism. Its function is as follows. Serine palmitoyltransferase (SPT). The heterodimer formed with LCB2 constitutes the catalytic core. In Oryza sativa subsp. japonica (Rice), this protein is Long chain base biosynthesis protein 1c.